The sequence spans 635 residues: Threonine--tRNA ligase (635 aa).

The editing domain stretch occupies residues 1–144 (MQLLLIHSDY…RTIRLEGAVP (144 aa)). Residues 215–514 (PHVELMRRLE…AEEGKVPNLP (300 aa)) are catalytic. Positions 307, 359, and 483 each coordinate Zn(2+).

This sequence belongs to the class-II aminoacyl-tRNA synthetase family. As to quaternary structure, homodimer. Zn(2+) serves as cofactor.

The protein resides in the cytoplasm. It carries out the reaction tRNA(Thr) + L-threonine + ATP = L-threonyl-tRNA(Thr) + AMP + diphosphate + H(+). Functionally, catalyzes the attachment of threonine to tRNA(Thr) in a two-step reaction: L-threonine is first activated by ATP to form Thr-AMP and then transferred to the acceptor end of tRNA(Thr). Also edits incorrectly charged L-seryl-tRNA(Thr). In Methanococcoides burtonii (strain DSM 6242 / NBRC 107633 / OCM 468 / ACE-M), this protein is Threonine--tRNA ligase.